A 236-amino-acid chain; its full sequence is Concanavalin-Ma (236 aa).

Mn(2+)-binding residues include glutamate 8 and aspartate 10. Ca(2+) is bound by residues aspartate 10, tyrosine 12, asparagine 14, and aspartate 19. Tyrosine 12 contributes to the a carbohydrate binding site. Positions 19 and 24 each coordinate Mn(2+). An a carbohydrate-binding site is contributed by 98–99; it reads LY. Ca(2+) is bound at residue aspartate 207. Residue arginine 227 coordinates a carbohydrate.

The protein belongs to the leguminous lectin family. In terms of assembly, homotetramer.

In terms of biological role, glucose/D-mannose specific lectin. The protein is Concanavalin-Ma of Canavalia rosea (Beach bean).